The primary structure comprises 470 residues: Poly(A) polymerase catalytic subunit (470 aa).

Residues Asp192 and Asp194 contribute to the active site.

This sequence belongs to the poxviridae poly(A) polymerase catalytic subunit family. Heterodimer of a large (catalytic) subunit and a small (regulatory) subunit.

The catalysed reaction is RNA(n) + ATP = RNA(n)-3'-adenine ribonucleotide + diphosphate. Functionally, polymerase that creates the 3'-poly(A) tail of mRNA's. The protein is Poly(A) polymerase catalytic subunit (PAPL) of Erythrocebus patas (Red guenon).